Here is a 393-residue protein sequence, read N- to C-terminus: Formate-dependent phosphoribosylglycinamide formyltransferase (393 aa).

Residues 22–23 (EL) and glutamate 82 each bind N(1)-(5-phospho-beta-D-ribosyl)glycinamide. Residues arginine 114, lysine 155, 160–165 (SSGHGQ), 195–198 (EGFI), and glutamate 203 each bind ATP. The ATP-grasp domain maps to 119–308 (RLAAEELGLP…QFALHARAIL (190 aa)). Residues glutamate 267 and glutamate 279 each coordinate Mg(2+). N(1)-(5-phospho-beta-D-ribosyl)glycinamide contacts are provided by residues aspartate 286, lysine 356, and 363 to 364 (RR).

Belongs to the PurK/PurT family. As to quaternary structure, homodimer.

It catalyses the reaction N(1)-(5-phospho-beta-D-ribosyl)glycinamide + formate + ATP = N(2)-formyl-N(1)-(5-phospho-beta-D-ribosyl)glycinamide + ADP + phosphate + H(+). Its pathway is purine metabolism; IMP biosynthesis via de novo pathway; N(2)-formyl-N(1)-(5-phospho-D-ribosyl)glycinamide from N(1)-(5-phospho-D-ribosyl)glycinamide (formate route): step 1/1. Involved in the de novo purine biosynthesis. Catalyzes the transfer of formate to 5-phospho-ribosyl-glycinamide (GAR), producing 5-phospho-ribosyl-N-formylglycinamide (FGAR). Formate is provided by PurU via hydrolysis of 10-formyl-tetrahydrofolate. The protein is Formate-dependent phosphoribosylglycinamide formyltransferase of Haemophilus ducreyi (strain 35000HP / ATCC 700724).